Here is a 763-residue protein sequence, read N- to C-terminus: Phosphoglycerol transferase I (763 aa).

4 consecutive transmembrane segments (helical) span residues 1–21, 26–46, 77–97, and 108–128; these read MSEL…AWKA, WWFA…ITLY, ILPG…LGWI, and VGYS…SPAF.

This sequence belongs to the OpgB family.

It is found in the cell inner membrane. It catalyses the reaction a phosphatidylglycerol + a membrane-derived-oligosaccharide D-glucose = a 1,2-diacyl-sn-glycerol + a membrane-derived-oligosaccharide 6-(glycerophospho)-D-glucose.. It participates in glycan metabolism; osmoregulated periplasmic glucan (OPG) biosynthesis. Its function is as follows. Transfers a phosphoglycerol residue from phosphatidylglycerol to the membrane-bound nascent glucan backbones. The sequence is that of Phosphoglycerol transferase I from Salmonella paratyphi B (strain ATCC BAA-1250 / SPB7).